The chain runs to 501 residues: Glycogen synthase 1 (501 aa).

Residue Lys18 coordinates ADP-alpha-D-glucose.

Belongs to the glycosyltransferase 1 family. Bacterial/plant glycogen synthase subfamily.

It catalyses the reaction [(1-&gt;4)-alpha-D-glucosyl](n) + ADP-alpha-D-glucose = [(1-&gt;4)-alpha-D-glucosyl](n+1) + ADP + H(+). It participates in glycan biosynthesis; glycogen biosynthesis. Synthesizes alpha-1,4-glucan chains using ADP-glucose. The protein is Glycogen synthase 1 of Geobacter sulfurreducens (strain ATCC 51573 / DSM 12127 / PCA).